Here is a 580-residue protein sequence, read N- to C-terminus: Proline--tRNA ligase (580 aa).

Belongs to the class-II aminoacyl-tRNA synthetase family. ProS type 1 subfamily. Homodimer.

It localises to the cytoplasm. The catalysed reaction is tRNA(Pro) + L-proline + ATP = L-prolyl-tRNA(Pro) + AMP + diphosphate. Functionally, catalyzes the attachment of proline to tRNA(Pro) in a two-step reaction: proline is first activated by ATP to form Pro-AMP and then transferred to the acceptor end of tRNA(Pro). As ProRS can inadvertently accommodate and process non-cognate amino acids such as alanine and cysteine, to avoid such errors it has two additional distinct editing activities against alanine. One activity is designated as 'pretransfer' editing and involves the tRNA(Pro)-independent hydrolysis of activated Ala-AMP. The other activity is designated 'posttransfer' editing and involves deacylation of mischarged Ala-tRNA(Pro). The misacylated Cys-tRNA(Pro) is not edited by ProRS. This Polynucleobacter necessarius subsp. necessarius (strain STIR1) protein is Proline--tRNA ligase.